Consider the following 619-residue polypeptide: Dihydroxy-acid dehydratase (619 aa).

Residue Asp-81 participates in Mg(2+) binding. [2Fe-2S] cluster is bound at residue Cys-122. Residues Asp-123 and Lys-124 each coordinate Mg(2+). Lys-124 is modified (N6-carboxylysine). A [2Fe-2S] cluster-binding site is contributed by Cys-198. Position 494 (Glu-494) interacts with Mg(2+). Ser-520 serves as the catalytic Proton acceptor.

Belongs to the IlvD/Edd family. Homodimer. Requires [2Fe-2S] cluster as cofactor. Mg(2+) serves as cofactor.

The enzyme catalyses (2R)-2,3-dihydroxy-3-methylbutanoate = 3-methyl-2-oxobutanoate + H2O. It catalyses the reaction (2R,3R)-2,3-dihydroxy-3-methylpentanoate = (S)-3-methyl-2-oxopentanoate + H2O. It participates in amino-acid biosynthesis; L-isoleucine biosynthesis; L-isoleucine from 2-oxobutanoate: step 3/4. The protein operates within amino-acid biosynthesis; L-valine biosynthesis; L-valine from pyruvate: step 3/4. Functions in the biosynthesis of branched-chain amino acids. Catalyzes the dehydration of (2R,3R)-2,3-dihydroxy-3-methylpentanoate (2,3-dihydroxy-3-methylvalerate) into 2-oxo-3-methylpentanoate (2-oxo-3-methylvalerate) and of (2R)-2,3-dihydroxy-3-methylbutanoate (2,3-dihydroxyisovalerate) into 2-oxo-3-methylbutanoate (2-oxoisovalerate), the penultimate precursor to L-isoleucine and L-valine, respectively. This chain is Dihydroxy-acid dehydratase, found in Neisseria meningitidis serogroup C / serotype 2a (strain ATCC 700532 / DSM 15464 / FAM18).